Reading from the N-terminus, the 215-residue chain is Ran-specific GTPase-activating protein 1 (215 aa).

Composition is skewed to basic and acidic residues over residues 1–18 and 26–35; these read MSAE…EEQK and VASKQTEEAK. The tract at residues 1 to 78 is disordered; that stretch reads MSAEQEKKTQ…ASPEVHFEPI (78 aa). Ser70 bears the Phosphoserine mark. The 137-residue stretch at 74–210 folds into the RanBD1 domain; that stretch reads HFEPIVKLSA…FEKYQEENAK (137 aa).

The protein belongs to the RANBP1 family.

It localises to the cytoplasm. In terms of biological role, stimulates the GTPase activity in the presence of RNA1. May potentiate the action of RanGAP1 (RNA1), thus playing the role of a negative regulator. The polypeptide is Ran-specific GTPase-activating protein 1 (sbp1) (Schizosaccharomyces pombe (strain 972 / ATCC 24843) (Fission yeast)).